Consider the following 228-residue polypeptide: ATP synthase subunit a (228 aa).

The next 6 helical transmembrane spans lie at alanine 19–valine 39, leucine 81–phenylalanine 101, serine 107–isoleucine 127, phenylalanine 136–isoleucine 156, leucine 178–leucine 198, and isoleucine 204–valine 224.

It belongs to the ATPase A chain family. F-type ATPases have 2 components, CF(1) - the catalytic core - and CF(0) - the membrane proton channel. CF(1) has five subunits: alpha(3), beta(3), gamma(1), delta(1), epsilon(1). CF(0) has three main subunits: a(1), b(2) and c(9-12). The alpha and beta chains form an alternating ring which encloses part of the gamma chain. CF(1) is attached to CF(0) by a central stalk formed by the gamma and epsilon chains, while a peripheral stalk is formed by the delta and b chains.

The protein resides in the cell inner membrane. Key component of the proton channel; it plays a direct role in the translocation of protons across the membrane. This chain is ATP synthase subunit a, found in Campylobacter hominis (strain ATCC BAA-381 / DSM 21671 / CCUG 45161 / LMG 19568 / NCTC 13146 / CH001A).